The chain runs to 763 residues: DEK domain-containing chromatin-associated protein 3 (763 aa).

Disordered stretches follow at residues 1 to 324 (MGED…RERK) and 458 to 681 (TGDV…SDKV). Positions 11 to 20 (PTANKTTSLE) are enriched in polar residues. 4 stretches are compositionally biased toward basic and acidic residues: residues 32–44 (AGGK…AKDE), 72–97 (SEVK…KDEG), 124–172 (TVMK…KANG), and 180–242 (DIKE…KVED). Residues 60-96 (KDDEKAETEDKESEVKKNEDNAETQKMEEKVEVTKDE) are a coiled coil. A coiled-coil region spans residues 214–286 (GKEKEDKEEN…KEESKGSKKR (73 aa)). The segment covering 243-252 (EKEGSEDEND) has biased composition (acidic residues). The segment covering 253–264 (NEKVESKDAKED) has biased composition (basic and acidic residues). The span at 265-277 (EKEETNDDKEDEK) shows a compositional bias: acidic residues. Positions 284–291 (KKRGKGTS) match the Nuclear localization signal 1 motif. Basic and acidic residues predominate over residues 295 to 311 (KVREKNKTEEVKKDAEP). Residues 475–484 (KGAKRKRTPK) are compositionally biased toward basic residues. Positions 483 to 490 (PKKTSPTA) match the Nuclear localization signal 2 motif. The span at 485–496 (KTSPTAGSSSSK) shows a compositional bias: low complexity. Residues 513–551 (KKSLAHSDDESEEEKEEEEKQEEEKAEEKEEKKEEENEN) are a coiled coil. The span at 521–533 (DESEEEKEEEEKQ) shows a compositional bias: acidic residues. A compositionally biased stretch (basic and acidic residues) spans 534–547 (EEEKAEEKEEKKEE). Residues 557–578 (SEDEAPQPSESEEKDESEEHSE) show a composition bias toward acidic residues. Low complexity-rich tracts occupy residues 606–615 (AVVAAKSSPP) and 650–660 (PIKASPAPSKS). A compositionally biased stretch (basic and acidic residues) spans 661–681 (ASKEKPVKRAGKGKDKPSDKV). A DEK-C domain is found at 676–731 (KPSDKVLKNAIVEILKRVDFSTATFTDILKELAKEFTEDLTPRKSSIKMIIQEELT). 2 DNA-binding regions span residues 694 to 708 (DFST…KELA) and 723 to 727 (KMIIQ). The stretch at 723–753 (KMIIQEELTKLADEEEEEEKKEEDSEKEEAG) forms a coiled coil. The disordered stretch occupies residues 730–763 (LTKLADEEEEEEKKEEDSEKEEAGGSGGGEEVKA). Positions 753–763 (GGSGGGEEVKA) are enriched in gly residues.

Found in a mRNA splicing-dependent exon junction complex (EJC). Binds specifically histones H3 and H4. Interacts with TOP1A, SCC3, At1g61730, At1g20940, At1g13930, DEK4, HDT1, NIT1, SHL, CYP19-1, GEBPL, HSP70-3, PDP2, PDP3, KIN2, RPL11A and PDS5A. Highly expressed in young seedlings.

The protein localises to the nucleus. It localises to the nucleolus. In terms of biological role, chromatin-associated protein which contributes to the modulation of chromatin structure (such as super-helical structure of DNA) and function. Binds to chromatin of protein-coding genes throughout the genome to regulate nucleosome occupancy and chromatin accessibility, and to modulate the expression of target genes. Negative regulator of stress tolerance (e.g. high salt). The protein is DEK domain-containing chromatin-associated protein 3 of Arabidopsis thaliana (Mouse-ear cress).